A 355-amino-acid polypeptide reads, in one-letter code: N-acylethanolamine-hydrolyzing acid amidase (355 aa).

The signal sequence occupies residues 1–17 (MLLLQIILLLLPVICSA). The Nucleophile role is filled by Cys122. N-linked (GlcNAc...) asparagine glycosylation is found at Asn150, Asn160, and Asn328.

The protein belongs to the acid ceramidase family. Heterodimer of an alpha and a beta subunit, produced by autocatalytic cleavage. Post-translationally, N-glycosylated. Autoproteolytic cleavage at pH 4.5 gives rise to the alpha and beta subunit. Cleavage gives rise to a conformation change that activates the enzyme. The same catalytic Cys residue mediates the autoproteolytic cleavage and subsequent hydrolysis of lipid substrates.

The protein resides in the lysosome. Its subcellular location is the membrane. The catalysed reaction is N-hexadecanoylethanolamine + H2O = ethanolamine + hexadecanoate. It catalyses the reaction an N-(long-chain fatty acyl)ethanolamine + H2O = a long-chain fatty acid + ethanolamine. Its pathway is lipid metabolism; fatty acid metabolism. Functionally, degrades bioactive fatty acid amides, such as N-palmitoylethanolamine, to ethanolamine and free fatty acids. This is N-acylethanolamine-hydrolyzing acid amidase from Caenorhabditis elegans.